Here is a 306-residue protein sequence, read N- to C-terminus: tRNA-cytidine(32) 2-sulfurtransferase (306 aa).

Positions 44–49 (SGGKDS) match the PP-loop motif motif. The [4Fe-4S] cluster site is built by C119, C122, and C210.

The protein belongs to the TtcA family. Homodimer. The cofactor is Mg(2+). Requires [4Fe-4S] cluster as cofactor.

Its subcellular location is the cytoplasm. It catalyses the reaction cytidine(32) in tRNA + S-sulfanyl-L-cysteinyl-[cysteine desulfurase] + AH2 + ATP = 2-thiocytidine(32) in tRNA + L-cysteinyl-[cysteine desulfurase] + A + AMP + diphosphate + H(+). It functions in the pathway tRNA modification. Catalyzes the ATP-dependent 2-thiolation of cytidine in position 32 of tRNA, to form 2-thiocytidine (s(2)C32). The sulfur atoms are provided by the cysteine/cysteine desulfurase (IscS) system. The sequence is that of tRNA-cytidine(32) 2-sulfurtransferase from Photorhabdus laumondii subsp. laumondii (strain DSM 15139 / CIP 105565 / TT01) (Photorhabdus luminescens subsp. laumondii).